Here is a 172-residue protein sequence, read N- to C-terminus: Adenine phosphoribosyltransferase (172 aa).

It belongs to the purine/pyrimidine phosphoribosyltransferase family. In terms of assembly, homodimer.

Its subcellular location is the cytoplasm. It carries out the reaction AMP + diphosphate = 5-phospho-alpha-D-ribose 1-diphosphate + adenine. It participates in purine metabolism; AMP biosynthesis via salvage pathway; AMP from adenine: step 1/1. Its function is as follows. Catalyzes a salvage reaction resulting in the formation of AMP, that is energically less costly than de novo synthesis. This chain is Adenine phosphoribosyltransferase, found in Rippkaea orientalis (strain PCC 8801 / RF-1) (Cyanothece sp. (strain PCC 8801)).